The sequence spans 598 residues: Aspartate--tRNA ligase (598 aa).

An L-aspartate-binding site is contributed by glutamate 175. Residues 199-202 (QLFK) form an aspartate region. Arginine 221 lines the L-aspartate pocket. Residues 221–223 (RDE) and glutamine 230 contribute to the ATP site. Histidine 450 is an L-aspartate binding site. An ATP-binding site is contributed by glutamate 486. Residue arginine 493 participates in L-aspartate binding. Position 538–541 (538–541 (GLDR)) interacts with ATP.

The protein belongs to the class-II aminoacyl-tRNA synthetase family. Type 1 subfamily. As to quaternary structure, homodimer.

Its subcellular location is the cytoplasm. It catalyses the reaction tRNA(Asp) + L-aspartate + ATP = L-aspartyl-tRNA(Asp) + AMP + diphosphate. Catalyzes the attachment of L-aspartate to tRNA(Asp) in a two-step reaction: L-aspartate is first activated by ATP to form Asp-AMP and then transferred to the acceptor end of tRNA(Asp). This is Aspartate--tRNA ligase from Lactiplantibacillus plantarum (strain ATCC BAA-793 / NCIMB 8826 / WCFS1) (Lactobacillus plantarum).